The following is a 357-amino-acid chain: MPSPADREKALVTALAQIDRQFGKGSVMRLGSDERAPVEVVPTGSIALDVALGIGGLPRGRIVEIYGPESSGKTTLTLHAIANAQRAGGIAAFIDAEHALDPDYARKLGVDIDALLVSQPDTGEQALEIADMLVRSGSIDLIVIDSVAALVPRAEIEGEMGDAHVGLQARLMSQALRKLTGALSQTNTTMIFINQLREKVGVFFGSPETTAGGKALKFYASVRLDIRRIETLKDGTDAVGNRTRVKVVKNKMAPPFKQAEFDILYGVGISHEGSLLDFGVEHALVKKSGAWYTYEGDQLGQGKENSRNFLIANPDIAAEIENKIKIKLGIVADPNADAEPTAAAGSLEEKLPARKGA.

ATP is bound at residue 67–74 (GPESSGKT).

This sequence belongs to the RecA family.

The protein resides in the cytoplasm. Functionally, can catalyze the hydrolysis of ATP in the presence of single-stranded DNA, the ATP-dependent uptake of single-stranded DNA by duplex DNA, and the ATP-dependent hybridization of homologous single-stranded DNAs. It interacts with LexA causing its activation and leading to its autocatalytic cleavage. The protein is Protein RecA of Leifsonia xyli subsp. xyli (strain CTCB07).